Here is a 365-residue protein sequence, read N- to C-terminus: 3-dehydroquinate synthase (365 aa).

NAD(+)-binding positions include 106 to 110 (GVIGD), 130 to 131 (TT), Lys142, Lys151, and 169 to 172 (FFAT). Zn(2+)-binding residues include Glu184, His247, and His264.

This sequence belongs to the sugar phosphate cyclases superfamily. Dehydroquinate synthase family. It depends on Co(2+) as a cofactor. Zn(2+) serves as cofactor. NAD(+) is required as a cofactor.

Its subcellular location is the cytoplasm. The enzyme catalyses 7-phospho-2-dehydro-3-deoxy-D-arabino-heptonate = 3-dehydroquinate + phosphate. The protein operates within metabolic intermediate biosynthesis; chorismate biosynthesis; chorismate from D-erythrose 4-phosphate and phosphoenolpyruvate: step 2/7. In terms of biological role, catalyzes the conversion of 3-deoxy-D-arabino-heptulosonate 7-phosphate (DAHP) to dehydroquinate (DHQ). This Listeria monocytogenes serotype 4a (strain HCC23) protein is 3-dehydroquinate synthase.